The sequence spans 478 residues: Glycogen synthase (478 aa).

Lys-16 lines the ADP-alpha-D-glucose pocket.

This sequence belongs to the glycosyltransferase 1 family. Bacterial/plant glycogen synthase subfamily.

The catalysed reaction is [(1-&gt;4)-alpha-D-glucosyl](n) + ADP-alpha-D-glucose = [(1-&gt;4)-alpha-D-glucosyl](n+1) + ADP + H(+). It participates in glycan biosynthesis; glycogen biosynthesis. Functionally, synthesizes alpha-1,4-glucan chains using ADP-glucose. In Lachnoclostridium phytofermentans (strain ATCC 700394 / DSM 18823 / ISDg) (Clostridium phytofermentans), this protein is Glycogen synthase.